A 392-amino-acid chain; its full sequence is Quinolinate synthase (392 aa).

Residues 1 to 23 form a disordered region; the sequence is MVDLPTTTPPAQPTTGNDEVDAL. Iminosuccinate-binding residues include histidine 57 and serine 74. Cysteine 131 lines the [4Fe-4S] cluster pocket. Iminosuccinate-binding positions include 163 to 165 and serine 184; that span reads YIN. Cysteine 254 serves as a coordination point for [4Fe-4S] cluster. Residues 280–282 and threonine 297 contribute to the iminosuccinate site; that span reads HPE. Residue cysteine 344 participates in [4Fe-4S] cluster binding.

It belongs to the quinolinate synthase family. Type 3 subfamily. The cofactor is [4Fe-4S] cluster.

It localises to the cytoplasm. The catalysed reaction is iminosuccinate + dihydroxyacetone phosphate = quinolinate + phosphate + 2 H2O + H(+). The protein operates within cofactor biosynthesis; NAD(+) biosynthesis; quinolinate from iminoaspartate: step 1/1. Its function is as follows. Catalyzes the condensation of iminoaspartate with dihydroxyacetone phosphate to form quinolinate. The polypeptide is Quinolinate synthase (Rhodopirellula baltica (strain DSM 10527 / NCIMB 13988 / SH1)).